The primary structure comprises 130 residues: Small ribosomal subunit protein uS11 (130 aa).

The protein belongs to the universal ribosomal protein uS11 family. In terms of assembly, part of the 30S ribosomal subunit. Interacts with proteins S7 and S18. Binds to IF-3.

Functionally, located on the platform of the 30S subunit, it bridges several disparate RNA helices of the 16S rRNA. Forms part of the Shine-Dalgarno cleft in the 70S ribosome. This Synechococcus sp. (strain WH7803) protein is Small ribosomal subunit protein uS11.